The chain runs to 218 residues: Large ribosomal subunit protein uL3 (218 aa).

This sequence belongs to the universal ribosomal protein uL3 family. As to quaternary structure, part of the 50S ribosomal subunit. Forms a cluster with proteins L14 and L19.

Its function is as follows. One of the primary rRNA binding proteins, it binds directly near the 3'-end of the 23S rRNA, where it nucleates assembly of the 50S subunit. The polypeptide is Large ribosomal subunit protein uL3 (Corynebacterium glutamicum (strain R)).